Consider the following 134-residue polypeptide: ATP synthase epsilon chain (134 aa).

This sequence belongs to the ATPase epsilon chain family. F-type ATPases have 2 components, CF(1) - the catalytic core - and CF(0) - the membrane proton channel. CF(1) has five subunits: alpha(3), beta(3), gamma(1), delta(1), epsilon(1). CF(0) has three main subunits: a, b and c.

It is found in the cell membrane. Produces ATP from ADP in the presence of a proton gradient across the membrane. The chain is ATP synthase epsilon chain from Clostridium botulinum (strain Eklund 17B / Type B).